Consider the following 476-residue polypeptide: tRNA(Ile)-lysidine synthase (476 aa).

30 to 35 (SGGPDS) contributes to the ATP binding site.

The protein belongs to the tRNA(Ile)-lysidine synthase family.

It localises to the cytoplasm. It carries out the reaction cytidine(34) in tRNA(Ile2) + L-lysine + ATP = lysidine(34) in tRNA(Ile2) + AMP + diphosphate + H(+). Its function is as follows. Ligates lysine onto the cytidine present at position 34 of the AUA codon-specific tRNA(Ile) that contains the anticodon CAU, in an ATP-dependent manner. Cytidine is converted to lysidine, thus changing the amino acid specificity of the tRNA from methionine to isoleucine. This is tRNA(Ile)-lysidine synthase from Bacillus cereus (strain ZK / E33L).